The sequence spans 90 residues: MSRTIFCTFLKKEAEGQDFQLYPGEIGKRIYNEISKEAWSQWVTKQTMLINEKKLSMMNVEDRKLLEQEMVNFLFEGQDVHIEGYTPPSQ.

Belongs to the Fe(2+)-trafficking protein family. As to quaternary structure, monomer.

Functionally, could be a mediator in iron transactions between iron acquisition and iron-requiring processes, such as synthesis and/or repair of Fe-S clusters in biosynthetic enzymes. This Yersinia enterocolitica serotype O:8 / biotype 1B (strain NCTC 13174 / 8081) protein is Probable Fe(2+)-trafficking protein.